The primary structure comprises 292 residues: uncharacterized protein (292 aa).

Lysine 8 is covalently cross-linked (Glycyl lysine isopeptide (Lys-Gly) (interchain with G-Cter in SUMO2)). Positions 47-67 (TKRKMLPSSSSRMRSDGFDEE) are disordered. Lysine 76 is covalently cross-linked (Glycyl lysine isopeptide (Lys-Gly) (interchain with G-Cter in SUMO2)). Asparagine 94 is subject to Phosphothreonine. A phosphoserine mark is found at lysine 96 and phenylalanine 97. Positions 122 to 292 (ETDSDQQDIT…ERSAESSEDD (171 aa)) are disordered. Threonine 123 carries the post-translational modification Phosphothreonine. Serine 125 and aspartate 126 each carry phosphoserine. A compositionally biased stretch (polar residues) spans 128–140 (QDITNGKKTSPQV). Basic residues predominate over residues 147-173 (SRKHKKSKKSHKKKQKKRSHKKQKKSK). Over residues 180–194 (TADSSSEFSEETGAS) the composition is skewed to polar residues. 2 stretches are compositionally biased toward basic residues: residues 197–215 (RKGKQPHKRKKKSRKKSLK) and 247–259 (KKTKRKKREKKAH). Residues 280–292 (ATDERSAESSEDD) are compositionally biased toward basic and acidic residues.

This is an uncharacterized protein from Homo sapiens (Human).